Consider the following 91-residue polypeptide: uncharacterized protein (91 aa).

3 helical membrane-spanning segments follow: residues 4–21 (YAII…LRRG), 28–50 (IIEV…SHAV), and 60–82 (VKAF…GTYL).

It is found in the cell membrane. This is an uncharacterized protein from Archaeoglobus fulgidus (strain ATCC 49558 / DSM 4304 / JCM 9628 / NBRC 100126 / VC-16).